The chain runs to 70 residues: Conotoxin Im11.11 (70 aa).

A signal peptide spans 1-25 (MFRLTSVGCILLVIAFLNLVGLTNA). 4 disulfides stabilise this stretch: cysteine 26–cysteine 40, cysteine 33–cysteine 45, cysteine 39–cysteine 49, and cysteine 44–cysteine 53. Proline 56 carries the proline amide modification. A propeptide spanning residues 60–70 (TRLQGFFKHRR) is cleaved from the precursor.

It belongs to the conotoxin I2 superfamily. As to expression, expressed by the venom duct.

The protein localises to the secreted. In terms of biological role, probable neurotoxin. The chain is Conotoxin Im11.11 from Conus imperialis (Imperial cone).